The following is an 804-amino-acid chain: Leucine--tRNA ligase (804 aa).

A 'HIGH' region motif is present at residues 40–51 (PYPSGAGLHVGH). Positions 576-580 (KMSKS) match the 'KMSKS' region motif. ATP is bound at residue Lys579.

The protein belongs to the class-I aminoacyl-tRNA synthetase family.

Its subcellular location is the cytoplasm. It carries out the reaction tRNA(Leu) + L-leucine + ATP = L-leucyl-tRNA(Leu) + AMP + diphosphate. This chain is Leucine--tRNA ligase, found in Bacillus pumilus (strain SAFR-032).